A 370-amino-acid polypeptide reads, in one-letter code: Peptidyl-prolyl cis-trans isomerase D (370 aa).

A Phosphoserine modification is found at serine 5. Positions 19–183 constitute a PPIase cyclophilin-type domain; that stretch reads FFDVDIGGER…KLCVIAECGE (165 aa). Lysine 171 carries the post-translational modification N6-acetyllysine. The chaperone activity stretch occupies residues 185 to 215; it reads KEGDDGGIFPKDGSGDSHPDFPEDADIDLKD. Residue serine 198 is modified to Phosphoserine. An interaction with HSP90AB1 region spans residues 214 to 370; the sequence is KDVDKILLIT…EKAVYAKMFA (157 aa). TPR repeat units lie at residues 223 to 256, 273 to 306, and 307 to 340; these read TEDL…VDSS, LSCV…DPSN, and TKAL…APED.

It belongs to the cyclophilin-type PPIase family. PPIase D subfamily. In terms of assembly, identified in ESR1 or NR3C1/GCR steroid receptor-chaperone complexes. Found in HSP90 chaperone complexes with kinase clients LCK or EIF2AK1. Two monomers associate with one HSP90 homodimer. Interacts with HSP90AA1. Interacts with HSP90AB1; PPID and FKBP4 compete for binding to HSP90AB1 and the interaction is mutually exclusive with the PPID:HSPA8 interaction. Interacts with HSPA8; PPID and STIP1 but not FKBP4 compete for binding to HSPA8 and the interaction is mutually exclusive with the PPID:HSP90AB1 interaction. Interacts with S100A1 and S100A2; the interactions dissociate the PPID:HSP90AA1 interaction. Interacts with S100A6. Interacts with MYB, ILF2, XRCC6, RACK1 and RPS3. Interacts with cytoplasmic dynein 1 intermediate chain (DYNC1I1 or DYNC1I2). Widely expressed.

The protein localises to the cytoplasm. It is found in the nucleus. The protein resides in the nucleolus. It localises to the nucleoplasm. It carries out the reaction [protein]-peptidylproline (omega=180) = [protein]-peptidylproline (omega=0). Its activity is regulated as follows. Less sensitive to inhibition by cyclosporin A than is CYP-18. Functionally, PPIase that catalyzes the cis-trans isomerization of proline imidic peptide bonds in oligopeptides and may therefore assist protein folding. Proposed to act as a co-chaperone in HSP90 complexes such as in unligated steroid receptors heterocomplexes. Different co-chaperones seem to compete for association with HSP90 thus establishing distinct HSP90-co-chaperone-receptor complexes with the potential to exert tissue-specific receptor activity control. May have a preference for estrogen receptor complexes and is not found in glucocorticoid receptor complexes. May be involved in cytoplasmic dynein-dependent movement of the receptor from the cytoplasm to the nucleus. May regulate MYB by inhibiting its DNA-binding activity. Involved in regulation of AHR signaling by promoting the formation of the AHR:ARNT dimer; the function is independent of HSP90 but requires the chaperone activity. Involved in regulation of UV radiation-induced apoptosis. Promotes cell viability in anaplastic lymphoma kinase-positive anaplastic large-cell lymphoma (ALK+ ALCL) cell lines. In terms of biological role, (Microbial infection) May be involved in hepatitis C virus (HCV) replication and release. This chain is Peptidyl-prolyl cis-trans isomerase D, found in Homo sapiens (Human).